The following is a 156-amino-acid chain: H/ACA ribonucleoprotein complex subunit 2-like protein (156 aa).

Belongs to the eukaryotic ribosomal protein eL8 family. As to quaternary structure, component of the small nucleolar ribonucleoprotein particle containing H/ACA-type snoRNAs (H/ACA snoRNPs).

The protein localises to the nucleus. Its subcellular location is the nucleolus. In terms of biological role, required for ribosome biogenesis. Part of a complex which catalyzes pseudouridylation of rRNA. This involves the isomerization of uridine such that the ribose is subsequently attached to C5, instead of the normal N1. Pseudouridine ('psi') residues may serve to stabilize the conformation of rRNAs. The sequence is that of H/ACA ribonucleoprotein complex subunit 2-like protein from Arabidopsis thaliana (Mouse-ear cress).